We begin with the raw amino-acid sequence, 210 residues long: Glycerol-3-phosphate acyltransferase (210 aa).

Transmembrane regions (helical) follow at residues 4–24 (LIVA…IVSA), 52–72 (AAIL…WLTG), 82–102 (DTSV…PVFF), 118–138 (LAIN…VAFF), and 159–179 (FLFG…LLIW).

It belongs to the PlsY family. Probably interacts with PlsX.

It is found in the cell inner membrane. It carries out the reaction an acyl phosphate + sn-glycerol 3-phosphate = a 1-acyl-sn-glycero-3-phosphate + phosphate. It participates in lipid metabolism; phospholipid metabolism. In terms of biological role, catalyzes the transfer of an acyl group from acyl-phosphate (acyl-PO(4)) to glycerol-3-phosphate (G3P) to form lysophosphatidic acid (LPA). This enzyme utilizes acyl-phosphate as fatty acyl donor, but not acyl-CoA or acyl-ACP. The chain is Glycerol-3-phosphate acyltransferase from Paraburkholderia phymatum (strain DSM 17167 / CIP 108236 / LMG 21445 / STM815) (Burkholderia phymatum).